We begin with the raw amino-acid sequence, 137 residues long: Peptide methionine sulfoxide reductase MsrB (137 aa).

Residues 7–129 enclose the MsrB domain; it reads VDDLKENLSE…NSASLSFTDE (123 aa). Zn(2+)-binding residues include Cys-46, Cys-49, Cys-95, and Cys-98. Cys-118 serves as the catalytic Nucleophile.

The protein belongs to the MsrB Met sulfoxide reductase family. Requires Zn(2+) as cofactor.

The catalysed reaction is L-methionyl-[protein] + [thioredoxin]-disulfide + H2O = L-methionyl-(R)-S-oxide-[protein] + [thioredoxin]-dithiol. In Escherichia fergusonii (strain ATCC 35469 / DSM 13698 / CCUG 18766 / IAM 14443 / JCM 21226 / LMG 7866 / NBRC 102419 / NCTC 12128 / CDC 0568-73), this protein is Peptide methionine sulfoxide reductase MsrB.